We begin with the raw amino-acid sequence, 92 residues long: LYR motif-containing protein 4A (92 aa).

Belongs to the complex I LYR family.

The chain is LYR motif-containing protein 4A (lyrm4a) from Salmo salar (Atlantic salmon).